Reading from the N-terminus, the 471-residue chain is Ribulose bisphosphate carboxylase large chain (471 aa).

Substrate contacts are provided by Asn-115 and Thr-165. Residue Lys-167 is the Proton acceptor of the active site. Lys-169 is a binding site for substrate. Mg(2+) contacts are provided by Lys-193, Asp-195, and Glu-196. Lys-193 carries the N6-carboxylysine modification. Residue His-286 is the Proton acceptor of the active site. Substrate-binding residues include Arg-287, His-319, and Ser-371.

Belongs to the RuBisCO large chain family. Type I subfamily. Heterohexadecamer of 8 large chains and 8 small chains. The cofactor is Mg(2+).

The protein resides in the carboxysome. It catalyses the reaction 2 (2R)-3-phosphoglycerate + 2 H(+) = D-ribulose 1,5-bisphosphate + CO2 + H2O. It carries out the reaction D-ribulose 1,5-bisphosphate + O2 = 2-phosphoglycolate + (2R)-3-phosphoglycerate + 2 H(+). Its function is as follows. RuBisCO catalyzes two reactions: the carboxylation of D-ribulose 1,5-bisphosphate, the primary event in carbon dioxide fixation, as well as the oxidative fragmentation of the pentose substrate in the photorespiration process. Both reactions occur simultaneously and in competition at the same active site. This chain is Ribulose bisphosphate carboxylase large chain, found in Prochlorococcus marinus (strain MIT 9515).